The chain runs to 295 residues: Aquaporin-9 (295 aa).

The Cytoplasmic segment spans residues 1-24 (MQPEGAEKGKSFKQRLVLKSSLAK). Residues 25–43 (ETLSEFLGTFILIVLGCGC) traverse the membrane as a helical segment. The Extracellular segment spans residues 44-57 (VAQAILSRGRFGGV). The helical transmembrane segment at 58–77 (ITINVGFSMAVAMAIYVAGG) threads the bilayer. At 78 to 79 (VS) the chain is on the cytoplasmic side. An intramembrane region (discontinuously helical) is located at residues 80 to 92 (GGHINPAVSLAMC). Positions 84–86 (NPA) match the NPA 1 motif. Residues 93–98 (LFGRMK) are Cytoplasmic-facing. A helical membrane pass occupies residues 99–123 (WFKLPFYVGAQFLGAFVGAATVFGI). The Extracellular segment spans residues 124-160 (YYDGLMSFAGGKLLIVGENATAHIFATYPAPYLSLAN). A helical transmembrane segment spans residues 161–178 (AFADQVVATMILLIIVFA). The Cytoplasmic segment spans residues 179–190 (IFDSRNLGAPRG). The chain crosses the membrane as a helical span at residues 191–207 (LEPIAIGLLIIVIASSL). Residues 208-210 (GLN) are Extracellular-facing. The discontinuously helical intramembrane region spans 211–225 (SGCAMNPARDLSPRL). Positions 216–218 (NPA) match the NPA 2 motif. The Extracellular portion of the chain corresponds to 226–243 (FTALAGWGFEVFRAGNNF). The chain crosses the membrane as a helical span at residues 244 to 264 (WWIPVVGPLVGAVIGGLIYVL). Over 265–295 (VIEIHHPEPDSVFKTEQSEDKPEKYELSVIM) the chain is Cytoplasmic.

Belongs to the MIP/aquaporin (TC 1.A.8) family. As to quaternary structure, homotetramer; each monomer provides an independent glycerol/water pore. Highly expressed in peripheral leukocytes. Also expressed in liver, lung, and spleen.

Its subcellular location is the cell membrane. It is found in the basolateral cell membrane. The catalysed reaction is glycerol(in) = glycerol(out). The enzyme catalyses H2O(in) = H2O(out). It catalyses the reaction urea(in) = urea(out). It carries out the reaction (S)-lactate(in) = (S)-lactate(out). The catalysed reaction is NH4(+)(in) = NH4(+)(out). The enzyme catalyses uracil(in) = uracil(out). It catalyses the reaction adenine(out) = adenine(in). It carries out the reaction 3-hydroxybutanoate(in) = 3-hydroxybutanoate(out). The catalysed reaction is D-sorbitol(in) = D-sorbitol(out). The enzyme catalyses D-mannitol(in) = D-mannitol(out). It catalyses the reaction H2O2(out) = H2O2(in). It carries out the reaction arsenite(in) = arsenite(out). The catalysed reaction is selenite(in) = selenite(out). Its function is as follows. Aquaglyceroporins form homotetrameric transmembrane channels, with each monomer independently mediating glycerol and water transport across the plasma membrane along their osmotic gradient. AQP9 is the primary route for glycerol uptake in hepatocytes, supporting hepatic gluconeogenesis. It exhibits broad specificity and may transport various small, non-charged solutes, including carbamides, polyols, purines, and pyrimidines. AQP9 may also facilitate hepatic urea extrusion. Due to its permeability to lactate, AQP9 might participate in the astrocyte-to-neuron lactate shuttle, supplying neurons with energy. Additionally, AQP9 is permeable to arsenite, contributing to arsenic excretion by the liver and providing partial protection against arsenic toxicity. It is also permeable to H2O2 in vivo. Could also be permeable to ammonium. The protein is Aquaporin-9 of Homo sapiens (Human).